The following is a 115-amino-acid chain: Large ribosomal subunit protein bL19 (115 aa).

It belongs to the bacterial ribosomal protein bL19 family.

In terms of biological role, this protein is located at the 30S-50S ribosomal subunit interface and may play a role in the structure and function of the aminoacyl-tRNA binding site. The protein is Large ribosomal subunit protein bL19 of Buchnera aphidicola subsp. Schizaphis graminum (strain Sg).